The following is a 692-amino-acid chain: Elongation factor G (692 aa).

Positions 8–283 constitute a tr-type G domain; that stretch reads KNTRNIGIMA…AVLDYLPSPV (276 aa). GTP-binding positions include 17 to 24, 81 to 85, and 135 to 138; these read AHIDAGKT, DTPGH, and NKMD.

The protein belongs to the TRAFAC class translation factor GTPase superfamily. Classic translation factor GTPase family. EF-G/EF-2 subfamily.

The protein resides in the cytoplasm. In terms of biological role, catalyzes the GTP-dependent ribosomal translocation step during translation elongation. During this step, the ribosome changes from the pre-translocational (PRE) to the post-translocational (POST) state as the newly formed A-site-bound peptidyl-tRNA and P-site-bound deacylated tRNA move to the P and E sites, respectively. Catalyzes the coordinated movement of the two tRNA molecules, the mRNA and conformational changes in the ribosome. In Exiguobacterium sibiricum (strain DSM 17290 / CCUG 55495 / CIP 109462 / JCM 13490 / 255-15), this protein is Elongation factor G.